The chain runs to 217 residues: Choline transport system permease protein OpuBB (217 aa).

Residues Thr19–Leu198 enclose the ABC transmembrane type-1 domain. A run of 6 helical transmembrane segments spans residues Ile23 to Val43, Gly52 to Ile74, Ala84 to Tyr101, Leu128 to Tyr148, Ile150 to Ile170, and Ile180 to Val200.

Belongs to the binding-protein-dependent transport system permease family. CysTW subfamily.

It localises to the cell membrane. Involved in a high affinity multicomponent binding-protein-dependent transport system for choline; probably responsible for the translocation of the substrate across the membrane. The sequence is that of Choline transport system permease protein OpuBB (opuBB) from Bacillus subtilis (strain 168).